Here is a 245-residue protein sequence, read N- to C-terminus: Probable phosphatase PC1_1798 (245 aa).

Zn(2+) contacts are provided by His7, His9, His15, His40, Glu73, His101, His131, Asp192, and His194.

It belongs to the PHP family. As to quaternary structure, homotrimer. Zn(2+) serves as cofactor.

The chain is Probable phosphatase PC1_1798 from Pectobacterium carotovorum subsp. carotovorum (strain PC1).